A 443-amino-acid polypeptide reads, in one-letter code: Thymidine phosphorylase (443 aa).

It belongs to the thymidine/pyrimidine-nucleoside phosphorylase family. As to quaternary structure, homodimer.

It catalyses the reaction thymidine + phosphate = 2-deoxy-alpha-D-ribose 1-phosphate + thymine. The protein operates within pyrimidine metabolism; dTMP biosynthesis via salvage pathway; dTMP from thymine: step 1/2. In terms of biological role, the enzymes which catalyze the reversible phosphorolysis of pyrimidine nucleosides are involved in the degradation of these compounds and in their utilization as carbon and energy sources, or in the rescue of pyrimidine bases for nucleotide synthesis. The sequence is that of Thymidine phosphorylase from Photobacterium profundum (strain SS9).